Reading from the N-terminus, the 359-residue chain is Ribosomal RNA large subunit methyltransferase M (359 aa).

Residues Ser186, 219 to 222, Asp238, Asp258, and Asp275 contribute to the S-adenosyl-L-methionine site; that span reads CPGG. The active-site Proton acceptor is Lys304.

The protein belongs to the class I-like SAM-binding methyltransferase superfamily. RNA methyltransferase RlmE family. RlmM subfamily. Monomer.

The protein localises to the cytoplasm. It catalyses the reaction cytidine(2498) in 23S rRNA + S-adenosyl-L-methionine = 2'-O-methylcytidine(2498) in 23S rRNA + S-adenosyl-L-homocysteine + H(+). Catalyzes the 2'-O-methylation at nucleotide C2498 in 23S rRNA. This is Ribosomal RNA large subunit methyltransferase M from Vibrio parahaemolyticus serotype O3:K6 (strain RIMD 2210633).